We begin with the raw amino-acid sequence, 320 residues long: Cytochrome f (320 aa).

Positions 1 to 35 are cleaved as a signal peptide; it reads MHTKNLFYSRPQQITQYLSAFLMMVILTRTSISSA. Residues Tyr36, Cys56, Cys59, and His60 each coordinate heme. The chain crosses the membrane as a helical span at residues 286 to 306; it reads VQVLLFFFASIILAQIFLVLK.

This sequence belongs to the cytochrome f family. The 4 large subunits of the cytochrome b6-f complex are cytochrome b6, subunit IV (17 kDa polypeptide, petD), cytochrome f and the Rieske protein, while the 4 small subunits are PetG, PetL, PetM and PetN. The complex functions as a dimer. Requires heme as cofactor.

Its subcellular location is the plastid thylakoid membrane. Its function is as follows. Component of the cytochrome b6-f complex, which mediates electron transfer between photosystem II (PSII) and photosystem I (PSI), cyclic electron flow around PSI, and state transitions. The chain is Cytochrome f from Cuscuta obtusiflora (Peruvian dodder).